Reading from the N-terminus, the 216-residue chain is Homeobox-leucine zipper protein ATHB-40 (216 aa).

Positions 28–52 are disordered; sequence GEVKQPKRRRKKTKGSVASADGGNG. Residues 52-111 constitute a DNA-binding region (homeobox); the sequence is GLFRKRKLTDEQVNMLEMSFGDEHKLESERKDRLAAELGLDPRQVAVWFQNRRARWKNKR. Positions 112 to 140 are leucine-zipper; the sequence is LEEEYNKLKNSHDNVVVDKCRLESEVIQL.

The protein belongs to the HD-ZIP homeobox family. Class I subfamily. In terms of tissue distribution, expressed in roots, flowers and siliques.

It is found in the nucleus. Its function is as follows. Probable transcription factor. This is Homeobox-leucine zipper protein ATHB-40 (ATHB-40) from Arabidopsis thaliana (Mouse-ear cress).